We begin with the raw amino-acid sequence, 373 residues long: MHFFVRKYRGKAALLSIGTFDGYKIYNCDPFGKCFHKIQGATSIVEMLFSTSLVALVEKDDGNNRKLKLINTKKSTTICELTFPTPLLAVKLNRKRLLAVLEEQIYVYDISNMLLLHTIETTSNVFAVCALSPNSENCYLAYPDSRDHEPRTEGESSSPNVSNSAVSGQVILWDVINCKQITKIEAHKDSLACLAFNSDGTMLATASDNGRIIRVFAIPSGQRLYQFRRGSLPAQIYSIAFHPDSSLLTVTSSTQTVHIFRLKEVYSNLERQGLLPSSPPPKESLLRRSSRSLIGTVGGYLPQSVSGMLDPERDFAYAHIPGDKVTSIAAFGPDNTIVNVATYDGNLYSFRVNLRTGGECAMVNHFCVGLTAA.

Residues 142–163 form a disordered region; the sequence is YPDSRDHEPRTEGESSSPNVSN. A compositionally biased stretch (basic and acidic residues) spans 144 to 154; sequence DSRDHEPRTEG. WD repeat units lie at residues 144–183, 186–226, and 231–270; these read DSRD…QITK, AHKD…RLYQ, and SLPA…SNLE. The L/FRRG motif signature appears at 227–231; that stretch reads FRRGS.

The protein belongs to the WD repeat PROPPIN family. As to quaternary structure, component of the PI(3,5)P2 regulatory complex. Interacts with atg5.

It is found in the preautophagosomal structure membrane. The protein localises to the vacuole membrane. Its subcellular location is the endosome membrane. In terms of biological role, the PI(3,5)P2 regulatory complex regulates both the synthesis and turnover of phosphatidylinositol 3,5-bisphosphate (PtdIns(3,5)P2). Necessary for proper vacuole morphology. Plays an important role in osmotically-induced vacuole fragmentation. Required for cytoplasm to vacuole transport (Cvt) vesicle formation, pexophagy and starvation-induced autophagy. Involved in correct atg9 trafficking to the preautophagosomal structure. Might also be involved in premeiotic DNA replication. Required for the recruitment of the atg5-atg12/atg16 complex to the preautophagosomal structure. The protein is Autophagy-related protein 18 (atg18) of Schizosaccharomyces pombe (strain 972 / ATCC 24843) (Fission yeast).